The chain runs to 944 residues: Translation initiation factor IF-2 (944 aa).

Disordered regions lie at residues Ile-61–Gln-157 and Thr-173–Ile-281. Residues Thr-132–Ser-150 are compositionally biased toward polar residues. Over residues Ser-175–Asn-185 the composition is skewed to low complexity. Basic and acidic residues predominate over residues Ala-186–His-203. The span at Glu-204–Ile-215 shows a compositional bias: basic residues. The span at Glu-244–Lys-259 shows a compositional bias: basic and acidic residues. One can recognise a tr-type G domain in the interval Glu-443–Lys-612. Residues Gly-452–Thr-459 are G1. A GTP-binding site is contributed by Gly-452–Thr-459. Residues Gly-477–His-481 are G2. The G3 stretch occupies residues Asp-498–Gly-501. GTP is bound by residues Asp-498–His-502 and Asn-552–Asp-555. The interval Asn-552–Asp-555 is G4. The segment at Ser-588–Lys-590 is G5.

This sequence belongs to the TRAFAC class translation factor GTPase superfamily. Classic translation factor GTPase family. IF-2 subfamily.

It localises to the cytoplasm. Functionally, one of the essential components for the initiation of protein synthesis. Protects formylmethionyl-tRNA from spontaneous hydrolysis and promotes its binding to the 30S ribosomal subunits. Also involved in the hydrolysis of GTP during the formation of the 70S ribosomal complex. This is Translation initiation factor IF-2 (infB) from Helicobacter pylori (strain ATCC 700392 / 26695) (Campylobacter pylori).